Consider the following 1118-residue polypeptide: Error-prone DNA polymerase (1118 aa).

Residues G1071 to Q1118 are disordered.

Belongs to the DNA polymerase type-C family. DnaE2 subfamily.

It is found in the cytoplasm. The catalysed reaction is DNA(n) + a 2'-deoxyribonucleoside 5'-triphosphate = DNA(n+1) + diphosphate. Its function is as follows. DNA polymerase involved in damage-induced mutagenesis and translesion synthesis (TLS). It is not the major replicative DNA polymerase. This Mesorhizobium japonicum (strain LMG 29417 / CECT 9101 / MAFF 303099) (Mesorhizobium loti (strain MAFF 303099)) protein is Error-prone DNA polymerase.